The sequence spans 192 residues: Peptidyl-tRNA hydrolase (192 aa).

Tyr-14 contacts tRNA. His-19 (proton acceptor) is an active-site residue. Residues Tyr-61, Asn-63, and Asn-107 each contribute to the tRNA site.

The protein belongs to the PTH family. Monomer.

It localises to the cytoplasm. It catalyses the reaction an N-acyl-L-alpha-aminoacyl-tRNA + H2O = an N-acyl-L-amino acid + a tRNA + H(+). Functionally, hydrolyzes ribosome-free peptidyl-tRNAs (with 1 or more amino acids incorporated), which drop off the ribosome during protein synthesis, or as a result of ribosome stalling. Its function is as follows. Catalyzes the release of premature peptidyl moieties from peptidyl-tRNA molecules trapped in stalled 50S ribosomal subunits, and thus maintains levels of free tRNAs and 50S ribosomes. The sequence is that of Peptidyl-tRNA hydrolase from Wolinella succinogenes (strain ATCC 29543 / DSM 1740 / CCUG 13145 / JCM 31913 / LMG 7466 / NCTC 11488 / FDC 602W) (Vibrio succinogenes).